A 1146-amino-acid polypeptide reads, in one-letter code: Lysine-specific demethylase 2A (1146 aa).

Residues 146–314 enclose the JmjC domain; it reads FSHTKLENLV…MQLRIYSIED (169 aa). Threonine 207 serves as a coordination point for substrate. Fe cation is bound by residues histidine 210 and aspartate 212. Lysine 227 provides a ligand contact to substrate. Fe cation is bound at residue histidine 282. 2 disordered regions span residues 363–467 and 554–585; these read LNGR…PDSP and TKPH…SSGA. Low complexity predominate over residues 373–387; the sequence is SSSSSSSSSGLSSSS. A compositionally biased stretch (acidic residues) spans 388–401; it reads DNDDSSDQDWEEEE. Residues 402 to 442 show a composition bias toward basic and acidic residues; sequence GLRKRERDRCRVERELQRKRNRDRQQRDQERDRHGRTERII. Positions 453–467 are enriched in pro residues; sequence LTPPPSLPLPTPDSP. Residues 566–584 show a composition bias toward low complexity; the sequence is STAPPRTSGTPSGTTASSG. The CXXC-type zinc finger occupies 585–631; the sequence is ARRRRVRCRKCQACVQRECGTCHYCKDMKKFGGPGRMKQSCVLRQCL. The Zn(2+) site is built by cysteine 592, cysteine 595, cysteine 598, cysteine 603, cysteine 606, cysteine 609, cysteine 625, and cysteine 630. The segment at 638 to 699 adopts a PHD-type zinc-finger fold; sequence SVTCALCGEV…YWECPKCYEG (62 aa). 2 disordered regions span residues 733–800 and 832–867; these read VLRP…EGDR and TPNP…ENVM. Positions 739–762 are enriched in pro residues; sequence GQSPPSPPLLLLPPSPSSAPPTPP. Positions 772-789 are enriched in basic and acidic residues; sequence SREERAKRRQLAREKENH. The segment covering 849–864 has biased composition (acidic residues); the sequence is EREEEEEEEEEEEETE. Residues 874 to 919 form the F-box domain; that stretch reads STSMQKDVWLSVFHYLTHEELCICMRVCKAWYKWGCDKRLWSRIDV. LRR repeat units lie at residues 945-966, 968-994, 1032-1057, 1058-1087, 1088-1112, and 1113-1138; these read WTNV…LKDL, LAGC…DLRW, GLDI…DLSH, CPLL…HLAG, CKGV…DLHG, and CKQV…CLSD.

Belongs to the JHDM1 histone demethylase family. Requires Fe(2+) as cofactor.

It localises to the nucleus. It is found in the nucleoplasm. The catalysed reaction is N(6),N(6)-dimethyl-L-lysyl(36)-[histone H3] + 2 2-oxoglutarate + 2 O2 = L-lysyl(36)-[histone H3] + 2 formaldehyde + 2 succinate + 2 CO2. Functionally, histone demethylase that specifically demethylates 'Lys-36' of histone H3, thereby playing a central role in histone code. Preferentially demethylates dimethylated H3 'Lys-36' residue while it has weak or no activity for mono- and tri-methylated H3 'Lys-36'. May also recognize and bind to some phosphorylated proteins and promote their ubiquitination and degradation. Required to maintain the heterochromatic state. Associates with centromeres and represses transcription of small non-coding RNAs that are encoded by the clusters of satellite repeats at the centromere. Required to sustain centromeric integrity and genomic stability, particularly during mitosis. May play a role in the regulation of circadian gene expression. The chain is Lysine-specific demethylase 2A (kdm2a) from Xenopus tropicalis (Western clawed frog).